The sequence spans 141 residues: Hemoglobin subunit alpha (141 aa).

Residues 1–141 enclose the Globin domain; that stretch reads VLSPDDKKHV…VSTVLTSKYR (141 aa). Ser3 carries the phosphoserine modification. An N6-succinyllysine mark is found at Lys7 and Lys11. N6-acetyllysine; alternate is present on Lys16. Lys16 carries the N6-succinyllysine; alternate modification. Tyr24 bears the Phosphotyrosine mark. Ser35 carries the phosphoserine modification. The residue at position 40 (Lys40) is an N6-succinyllysine. Ser49 is subject to Phosphoserine. O2 is bound at residue His58. A heme b-binding site is contributed by His87. Ser102 carries the post-translational modification Phosphoserine. Thr108 bears the Phosphothreonine mark. Phosphoserine occurs at positions 124 and 131. Phosphothreonine occurs at positions 134 and 137. Ser138 carries the post-translational modification Phosphoserine.

It belongs to the globin family. In terms of assembly, heterotetramer of two alpha chains and two beta chains. Red blood cells.

Involved in oxygen transport from the lung to the various peripheral tissues. Functionally, hemopressin acts as an antagonist peptide of the cannabinoid receptor CNR1. Hemopressin-binding efficiently blocks cannabinoid receptor CNR1 and subsequent signaling. The chain is Hemoglobin subunit alpha (HBA) from Theropithecus gelada (Gelada baboon).